We begin with the raw amino-acid sequence, 237 residues long: Probable transcriptional regulatory protein NIS_0560 (237 aa).

It belongs to the TACO1 family.

It is found in the cytoplasm. In Nitratiruptor sp. (strain SB155-2), this protein is Probable transcriptional regulatory protein NIS_0560.